Here is a 146-residue protein sequence, read N- to C-terminus: MRVVLQRSKEASVTVDGEIVGQIPFGLTLLVGITHEDTEKDATYIAEKIANLRIFEDESGKMNHSVLDVEGQVLSISQFTLYGDCRKGRRPNFMDAAKPDYAEHLYDFFNEEVRKQGLHVETGKFGAMMDVSLINDGPVTLIVESK.

The Gly-cisPro motif, important for rejection of L-amino acids motif lies at 137–138 (GP).

The protein belongs to the DTD family. In terms of assembly, homodimer.

It is found in the cytoplasm. The enzyme catalyses glycyl-tRNA(Ala) + H2O = tRNA(Ala) + glycine + H(+). It carries out the reaction a D-aminoacyl-tRNA + H2O = a tRNA + a D-alpha-amino acid + H(+). Its function is as follows. An aminoacyl-tRNA editing enzyme that deacylates mischarged D-aminoacyl-tRNAs. Also deacylates mischarged glycyl-tRNA(Ala), protecting cells against glycine mischarging by AlaRS. Acts via tRNA-based rather than protein-based catalysis; rejects L-amino acids rather than detecting D-amino acids in the active site. By recycling D-aminoacyl-tRNA to D-amino acids and free tRNA molecules, this enzyme counteracts the toxicity associated with the formation of D-aminoacyl-tRNA entities in vivo and helps enforce protein L-homochirality. This chain is D-aminoacyl-tRNA deacylase, found in Bacillus thuringiensis subsp. konkukian (strain 97-27).